The sequence spans 180 residues: Large ribosomal subunit protein uL5 (180 aa).

This sequence belongs to the universal ribosomal protein uL5 family. In terms of assembly, part of the 50S ribosomal subunit; part of the 5S rRNA/L5/L18/L25 subcomplex. Contacts the 5S rRNA and the P site tRNA. Forms a bridge to the 30S subunit in the 70S ribosome.

In terms of biological role, this is one of the proteins that bind and probably mediate the attachment of the 5S RNA into the large ribosomal subunit, where it forms part of the central protuberance. In the 70S ribosome it contacts protein S13 of the 30S subunit (bridge B1b), connecting the 2 subunits; this bridge is implicated in subunit movement. Contacts the P site tRNA; the 5S rRNA and some of its associated proteins might help stabilize positioning of ribosome-bound tRNAs. This is Large ribosomal subunit protein uL5 from Acholeplasma laidlawii (strain PG-8A).